A 374-amino-acid chain; its full sequence is Cyclin-D (374 aa).

It belongs to the cyclin family. Cyclin D subfamily.

This Ostreococcus tauri protein is Cyclin-D (CycD).